Reading from the N-terminus, the 486-residue chain is Protein nucleotidyltransferase YdiU (486 aa).

ATP contacts are provided by glycine 90, glycine 92, arginine 93, lysine 113, aspartate 125, glycine 126, arginine 176, and arginine 183. The active-site Proton acceptor is aspartate 252. Mg(2+)-binding residues include asparagine 253 and aspartate 262. Aspartate 262 provides a ligand contact to ATP.

The protein belongs to the SELO family. The cofactor is Mg(2+). Mn(2+) serves as cofactor.

It carries out the reaction L-seryl-[protein] + ATP = 3-O-(5'-adenylyl)-L-seryl-[protein] + diphosphate. It catalyses the reaction L-threonyl-[protein] + ATP = 3-O-(5'-adenylyl)-L-threonyl-[protein] + diphosphate. The catalysed reaction is L-tyrosyl-[protein] + ATP = O-(5'-adenylyl)-L-tyrosyl-[protein] + diphosphate. The enzyme catalyses L-histidyl-[protein] + UTP = N(tele)-(5'-uridylyl)-L-histidyl-[protein] + diphosphate. It carries out the reaction L-seryl-[protein] + UTP = O-(5'-uridylyl)-L-seryl-[protein] + diphosphate. It catalyses the reaction L-tyrosyl-[protein] + UTP = O-(5'-uridylyl)-L-tyrosyl-[protein] + diphosphate. In terms of biological role, nucleotidyltransferase involved in the post-translational modification of proteins. It can catalyze the addition of adenosine monophosphate (AMP) or uridine monophosphate (UMP) to a protein, resulting in modifications known as AMPylation and UMPylation. In Stutzerimonas stutzeri (strain A1501) (Pseudomonas stutzeri), this protein is Protein nucleotidyltransferase YdiU.